Consider the following 138-residue polypeptide: Basic phospholipase A2 PLA-N (138 aa).

An N-terminal signal peptide occupies residues 1–16; that stretch reads MRTLWIMAVLLVGVEG. 7 cysteine pairs are disulfide-bonded: C42-C131, C44-C60, C59-C111, C65-C138, C66-C104, C73-C97, and C91-C102. Y43, G45, and G47 together coordinate Ca(2+). H63 is a catalytic residue. D64 lines the Ca(2+) pocket. D105 is an active-site residue.

The protein belongs to the phospholipase A2 family. Group II subfamily. D49 sub-subfamily. It depends on Ca(2+) as a cofactor. As to expression, expressed by the venom gland.

It localises to the secreted. It carries out the reaction a 1,2-diacyl-sn-glycero-3-phosphocholine + H2O = a 1-acyl-sn-glycero-3-phosphocholine + a fatty acid + H(+). Snake venom phospholipase A2 (PLA2) that displays edema-inducing activities, as well as presynaptic neurotoxicity and myotoxicity. PLA2 catalyzes the calcium-dependent hydrolysis of the 2-acyl groups in 3-sn-phosphoglycerides. This is Basic phospholipase A2 PLA-N from Protobothrops flavoviridis (Habu).